The primary structure comprises 97 residues: YcgL domain-containing protein PMI1171 (97 aa).

The region spanning Met-3–Leu-87 is the YcgL domain.

This is YcgL domain-containing protein PMI1171 from Proteus mirabilis (strain HI4320).